Consider the following 187-residue polypeptide: Phosphatidylethanolamine-binding protein 1 (187 aa).

A2 is modified (N-acetylalanine; in peptide hippocampal cholinergic neurostimulating). Residues S6 and S13 each carry the phosphoserine modification. Position 42 is a phosphothreonine (T42). 4 positions are modified to phosphoserine: S52, S54, S98, and S153. The segment at 93 to 134 (KGNDISSGTVLSEYVGSGPPKDTGLHRYVWLVYEQEQPLNCD) is interaction with RAF1.

This sequence belongs to the phosphatidylethanolamine-binding protein family. In terms of assembly, has a tendency to form dimers by disulfide cross-linking. Interacts with RAF1 and this interaction is enhanced if RAF1 is phosphorylated on residues 'Ser-338', 'Ser-339', 'Tyr-340' and 'Tyr-341'. Interacts with ALOX15; in response to IL13/interleukin-13, prevents the interaction of PEBP1 with RAF1 to activate the ERK signaling cascade. As to expression, major component of epididymal secretions and sperm plasma membranes. It is present in cytosols from a variety of other tissues. Highly expressed in brain.

Its subcellular location is the cytoplasm. It is found in the membrane. Functionally, binds ATP, opioids and phosphatidylethanolamine. Has lower affinity for phosphatidylinositol and phosphatidylcholine. Serine protease inhibitor which inhibits thrombin, neuropsin and chymotrypsin but not trypsin, tissue type plasminogen activator and elastase. Inhibits the kinase activity of RAF1 by inhibiting its activation and by dissociating the RAF1/MEK complex and acting as a competitive inhibitor of MEK phosphorylation. Its function is as follows. HCNP may be involved in the function of the presynaptic cholinergic neurons of the central nervous system. HCNP increases the production of choline acetyltransferase but not acetylcholinesterase. Seems to be mediated by a specific receptor. The polypeptide is Phosphatidylethanolamine-binding protein 1 (Pebp1) (Rattus norvegicus (Rat)).